A 256-amino-acid chain; its full sequence is Nickel import ATP-binding protein NikD (256 aa).

Residues 6-245 enclose the ABC transporter domain; that stretch reads LEIRGLRIET…PASATARTLL (240 aa). 38-45 serves as a coordination point for ATP; that stretch reads GASGSGKS.

This sequence belongs to the ABC transporter superfamily. Nickel importer (TC 3.A.1.5.3) family. The complex is composed of two ATP-binding proteins (NikD and NikE), two transmembrane proteins (NikB and NikC) and a solute-binding protein (NikA).

Its subcellular location is the cell inner membrane. It catalyses the reaction Ni(2+)(out) + ATP + H2O = Ni(2+)(in) + ADP + phosphate + H(+). Functionally, part of the ABC transporter complex NikABCDE involved in nickel import. Responsible for energy coupling to the transport system. The chain is Nickel import ATP-binding protein NikD from Pseudomonas putida (strain ATCC 47054 / DSM 6125 / CFBP 8728 / NCIMB 11950 / KT2440).